The following is a 66-amino-acid chain: MPKLKTRRAAAKRFRVTGSGKFMRRRAFHNHLLDHKSPKRKRYLGTMAVVDERDHDRVSHMLPYAG.

It belongs to the bacterial ribosomal protein bL35 family.

The chain is Large ribosomal subunit protein bL35 from Synechococcus sp. (strain RCC307).